We begin with the raw amino-acid sequence, 394 residues long: GTPase Obg (394 aa).

In terms of domain architecture, Obg spans 5–163 (SNFVDYVKIY…RMVIMQLKML (159 aa)). The segment at 26-45 (HFRREKYIPKGGPDGGDGGR) is disordered. Residues 164 to 330 (ADVGLVGFPN…LKDTLWKELS (167 aa)) form the OBG-type G domain. GTP-binding positions include 170–177 (GFPNAGKS), 195–199 (FTTLE), 217–220 (DIPG), 284–287 (TKCD), and 311–313 (SAV). The Mg(2+) site is built by Ser177 and Thr197.

Belongs to the TRAFAC class OBG-HflX-like GTPase superfamily. OBG GTPase family. Monomer. Mg(2+) is required as a cofactor.

It is found in the cytoplasm. An essential GTPase which binds GTP, GDP and possibly (p)ppGpp with moderate affinity, with high nucleotide exchange rates and a fairly low GTP hydrolysis rate. Plays a role in control of the cell cycle, stress response, ribosome biogenesis and in those bacteria that undergo differentiation, in morphogenesis control. The sequence is that of GTPase Obg from Porphyromonas gingivalis (strain ATCC 33277 / DSM 20709 / CIP 103683 / JCM 12257 / NCTC 11834 / 2561).